Reading from the N-terminus, the 54-residue chain is Large ribosomal subunit protein bL33B (54 aa).

This sequence belongs to the bacterial ribosomal protein bL33 family.

The chain is Large ribosomal subunit protein bL33B from Mycolicibacterium smegmatis (strain ATCC 700084 / mc(2)155) (Mycobacterium smegmatis).